The primary structure comprises 464 residues: Potassium/proton antiporter CemA (464 aa).

A run of 5 helical transmembrane segments spans residues 36–56 (FSLSLWGILKYSGIYFCTEIL), 241–261 (ASVSLQYVGFLLFLFPIQIAI), 341–361 (LLLRLATNAISIATLFPLLIF), 389–409 (ILLLTDLCVGFHSPHGWEILV), and 425–445 (TPCFVSTFPVILDTLFKYWIF).

Belongs to the CemA family.

It localises to the plastid. Its subcellular location is the chloroplast inner membrane. The enzyme catalyses K(+)(in) + H(+)(out) = K(+)(out) + H(+)(in). Its function is as follows. Contributes to K(+)/H(+) antiport activity by supporting proton efflux to control proton extrusion and homeostasis in chloroplasts in a light-dependent manner to modulate photosynthesis. Prevents excessive induction of non-photochemical quenching (NPQ) under continuous-light conditions. Indirectly promotes efficient inorganic carbon uptake into chloroplasts. This chain is Potassium/proton antiporter CemA, found in Adiantum capillus-veneris (Maidenhair fern).